We begin with the raw amino-acid sequence, 921 residues long: Sodium/calcium exchanger 2 (921 aa).

The first 20 residues, 1 to 20 (MAPLALVGVALLLGAPHCLG), serve as a signal peptide directing secretion. Residues 21–68 (EATPTPSLPPPPANDSDASPGGCQGSYRCQPGVLLPVWEPDDPSLGDK) lie on the Extracellular side of the membrane. Residues 23 to 42 (TPTPSLPPPPANDSDASPGG) form a disordered region. An N-linked (GlcNAc...) asparagine glycan is attached at asparagine 34. A helical transmembrane segment spans residues 69-90 (AARAVVYFVAMVYMFLGLSIIA). Residues 91–130 (DRFMASIEVITSKEKEITITKANGETSVGTVRIWNETVSN) are Cytoplasmic-facing. Residues 131–152 (LTLMALGSSAPEILLSVIEVCG) form a helical membrane-spanning segment. The stretch at 135 to 175 (ALGSSAPEILLSVIEVCGHNFQAGELGPGTIVGSAAFNMFV) is one Alpha-1 repeat. The Extracellular segment spans residues 153–164 (HNFQAGELGPGT). The chain crosses the membrane as a helical span at residues 165 to 185 (IVGSAAFNMFVVIAVCVYVIP). Residues 186–196 (AGESRKIKHLR) lie on the Cytoplasmic side of the membrane. Residues 197–219 (VFFVTASWSIFAYVWLYLILAVF) form a helical membrane-spanning segment. The Extracellular segment spans residues 220–222 (SPG). The chain crosses the membrane as a helical span at residues 223–246 (VVQVWEALLTLVFFPVCVVFAWMA). Residues 247–720 (DKRLLFYKYV…DGSREERLPS (474 aa)) are Cytoplasmic-facing. The tract at residues 248–267 (KRLLFYKYVYKRYRTDPRSG) is putative calmodulin-binding region. Residues 372 to 391 (AADAARRPGANDGAPDDEDD) are disordered. Calx-beta domains follow at residues 384–483 (GAPD…VRLL) and 512–612 (ATVT…IELG). The Ca(2+) site is built by glutamate 407, aspartate 443, aspartate 468, aspartate 469, isoleucine 471, glutamate 473, glutamate 476, aspartate 518, aspartate 519, aspartate 520, glutamate 536, aspartate 598, glutamate 599, and glutamate 600. Position 622 is a phosphoserine (serine 622). Residue glutamate 665 participates in Ca(2+) binding. Residues 721–740 (CFDYVMHFLTVFWKVLFACL) form a helical membrane-spanning segment. Over 741-747 (PPTEYCH) the chain is Extracellular. The helical transmembrane segment at 748-770 (GWACFGVCILVIGLLTALIGDLA) threads the bilayer. The Cytoplasmic segment spans residues 771–772 (SH). The helical transmembrane segment at 773-791 (FGCTVGLKDSVNAVVFVAL) threads the bilayer. The stretch at 790-826 (ALGTSIPDTFASKVAALQDQCADASIGNVTGSNAVNV) is one Alpha-2 repeat. Over 792-822 (GTSIPDTFASKVAALQDQCADASIGNVTGSN) the chain is Extracellular. Asparagine 817 is a glycosylation site (N-linked (GlcNAc...) asparagine). Residues 823–843 (AVNVFLGLGVAWSVAAVYWAV) form a helical membrane-spanning segment. Over 844 to 854 (QGRPFEVRTGT) the chain is Cytoplasmic. Residues 855 to 875 (LAFSVTLFTVFAFVGIAVLLY) traverse the membrane as a helical segment. Residues 876 to 892 (RRRPHIGGELGGPRGPK) are Extracellular-facing. A helical transmembrane segment spans residues 893–909 (LATTALFLGLWFLYILF). At 910–921 (ASLEAYCHIRGF) the chain is on the cytoplasmic side.

Belongs to the Ca(2+):cation antiporter (CaCA) (TC 2.A.19) family. SLC8 subfamily. Detected in neocortex and hippocampus on pyramidal cells, astrocyte processes and dendrites (at protein level). Brain and skeletal muscle.

It is found in the cell membrane. The protein resides in the basolateral cell membrane. The protein localises to the perikaryon. Its subcellular location is the cell projection. It localises to the dendrite. It is found in the dendritic spine. It catalyses the reaction Ca(2+)(in) + 3 Na(+)(out) = Ca(2+)(out) + 3 Na(+)(in). With respect to regulation, calcium transport is down-regulated by Na(+) and stimulated by Ca(2+). Mediates the electrogenic exchange of Ca(2+) against Na(+) ions across the cell membrane, and thereby contributes to the regulation of cytoplasmic Ca(2+) levels and Ca(2+)-dependent cellular processes. Contributes to cellular Ca(2+) homeostasis in excitable cells. Contributes to the rapid decrease of cytoplasmic Ca(2+) levels back to baseline after neuronal activation, and thereby contributes to modulate synaptic plasticity, learning and memory. Plays a role in regulating urinary Ca(2+) and Na(+) excretion. This Rattus norvegicus (Rat) protein is Sodium/calcium exchanger 2 (Slc8a2).